The chain runs to 264 residues: Thymidylate synthase (264 aa).

Arg21 is a dUMP binding site. His51 contacts (6R)-5,10-methylene-5,6,7,8-tetrahydrofolate. 126–127 (RR) contacts dUMP. Catalysis depends on Cys146, which acts as the Nucleophile. DUMP-binding positions include 166 to 169 (RSAD), Asn177, and 207 to 209 (HLY). (6R)-5,10-methylene-5,6,7,8-tetrahydrofolate is bound at residue Asp169. (6R)-5,10-methylene-5,6,7,8-tetrahydrofolate is bound at residue Ala263.

It belongs to the thymidylate synthase family. Bacterial-type ThyA subfamily. As to quaternary structure, homodimer.

It localises to the cytoplasm. It carries out the reaction dUMP + (6R)-5,10-methylene-5,6,7,8-tetrahydrofolate = 7,8-dihydrofolate + dTMP. It functions in the pathway pyrimidine metabolism; dTTP biosynthesis. Catalyzes the reductive methylation of 2'-deoxyuridine-5'-monophosphate (dUMP) to 2'-deoxythymidine-5'-monophosphate (dTMP) while utilizing 5,10-methylenetetrahydrofolate (mTHF) as the methyl donor and reductant in the reaction, yielding dihydrofolate (DHF) as a by-product. This enzymatic reaction provides an intracellular de novo source of dTMP, an essential precursor for DNA biosynthesis. This is Thymidylate synthase from Nitrosomonas europaea (strain ATCC 19718 / CIP 103999 / KCTC 2705 / NBRC 14298).